A 967-amino-acid polypeptide reads, in one-letter code: Alanine--tRNA ligase, cytoplasmic (967 aa).

Zn(2+) is bound by residues histidine 605, histidine 609, cysteine 724, and histidine 728.

The protein belongs to the class-II aminoacyl-tRNA synthetase family. Monomer. Zn(2+) serves as cofactor. Post-translationally, the N-terminus is blocked.

It localises to the cytoplasm. It carries out the reaction tRNA(Ala) + L-alanine + ATP = L-alanyl-tRNA(Ala) + AMP + diphosphate. Its function is as follows. Catalyzes the attachment of alanine to tRNA(Ala) in a two-step reaction: alanine is first activated by ATP to form Ala-AMP and then transferred to the acceptor end of tRNA(Ala). Also edits incorrectly charged tRNA(Ala) via its editing domain. This chain is Alanine--tRNA ligase, cytoplasmic, found in Bombyx mori (Silk moth).